A 260-amino-acid chain; its full sequence is MNPFDSQSEDASDAIGRSLGRRPLARKKLSEMVEEELEQMIRRREFAEGEPLPSERELMAFFNVGRPSVREALAALKRKGLVQISNGERARVSRPSADTIISELSGMAKDFLSHPGGIAHFEQLRLFFESSLVRYAAEKATDEQLERLTKALDINRQSLADNAQFIRSDVEFHRVLAEIPGNPIFMAIHVALLDWLIAARPAVPDAELIEHNNISYQQHIAIVDAIRKRDPDEADRALQTHLNSVFATWQALSQKKKSRK.

The interval 1 to 20 (MNPFDSQSEDASDAIGRSLG) is disordered. The 69-residue stretch at 27–95 (KKLSEMVEEE…NGERARVSRP (69 aa)) folds into the HTH gntR-type domain. The H-T-H motif DNA-binding region spans 55–74 (ERELMAFFNVGRPSVREALA).

Belongs to the NanR family.

In terms of biological role, transcriptional repressor that controls expression of the genes required for the catabolism of sialic acids. This Cronobacter sakazakii (strain ATCC BAA-894) (Enterobacter sakazakii) protein is HTH-type transcriptional repressor NanR.